The chain runs to 167 residues: MRVEVGQIVNTHGIKGEIKVKSNSDFTDVRFQPGQVLTVVHNNNDLEYTVKSHRVHKGLHMLTFEGINNINDIEHLKGSSIYQERDHEDIVLEENEYYYSDIIGCTVFDDQETPIGRVINIFETGANDVWVIKGSKEYLIPYIADVVKEVDVENKKIIITPMEGLLD.

The region spanning 94–165 (ENEYYYSDII…KIIITPMEGL (72 aa)) is the PRC barrel domain.

The protein belongs to the RimM family. In terms of assembly, binds ribosomal protein uS19.

It is found in the cytoplasm. In terms of biological role, an accessory protein needed during the final step in the assembly of 30S ribosomal subunit, possibly for assembly of the head region. Essential for efficient processing of 16S rRNA. May be needed both before and after RbfA during the maturation of 16S rRNA. It has affinity for free ribosomal 30S subunits but not for 70S ribosomes. The chain is Ribosome maturation factor RimM from Staphylococcus aureus (strain bovine RF122 / ET3-1).